We begin with the raw amino-acid sequence, 314 residues long: Endo-beta-N-acetylglucosaminidase (314 aa).

The N-terminal stretch at 1 to 47 (MQFGIVAAIADGGRTARAGGSVRPPRRPPASHTAWGLPRGRPTGQPH) is a signal peptide. The disordered stretch occupies residues 14–54 (RTARAGGSVRPPRRPPASHTAWGLPRGRPTGQPHATPTKSG). In terms of domain architecture, GH18 spans 55–309 (PTSIAYVEVN…SSMTKVLYGQ (255 aa)). The active-site Proton donor is E175.

The protein belongs to the glycosyl hydrolase 18 family. Monomer.

Its subcellular location is the secreted. The enzyme catalyses an N(4)-(oligosaccharide-(1-&gt;3)-[oligosaccharide-(1-&gt;6)]-beta-D-Man-(1-&gt;4)-beta-D-GlcNAc-(1-&gt;4)-alpha-D-GlcNAc)-L-asparaginyl-[protein] + H2O = an oligosaccharide-(1-&gt;3)-[oligosaccharide-(1-&gt;6)]-beta-D-Man-(1-&gt;4)-D-GlcNAc + N(4)-(N-acetyl-beta-D-glucosaminyl)-L-asparaginyl-[protein]. Its function is as follows. Cleaves asparagine-linked oligomannose and hybrid, but not complex, oligosaccharides from glycoproteins. This Flavobacterium sp. (strain SK1022) protein is Endo-beta-N-acetylglucosaminidase.